We begin with the raw amino-acid sequence, 139 residues long: Transcription antitermination protein NusB (139 aa).

The protein belongs to the NusB family.

In terms of biological role, involved in transcription antitermination. Required for transcription of ribosomal RNA (rRNA) genes. Binds specifically to the boxA antiterminator sequence of the ribosomal RNA (rrn) operons. This Salmonella agona (strain SL483) protein is Transcription antitermination protein NusB.